The following is a 180-amino-acid chain: Inner membrane-spanning protein YciB (180 aa).

The next 6 helical transmembrane spans lie at 4-24 (FLSE…GGGI), 25-45 (QHAT…CYVI), 49-69 (VSKL…ITLI), 76-96 (IKIK…MSGI), 118-138 (ITLS…NEVV), and 150-170 (FKVF…LPLL).

It belongs to the YciB family.

The protein localises to the cell inner membrane. In terms of biological role, plays a role in cell envelope biogenesis, maintenance of cell envelope integrity and membrane homeostasis. The polypeptide is Inner membrane-spanning protein YciB (Rickettsia rickettsii (strain Iowa)).